The primary structure comprises 1049 residues: MAGELISFGIQNLWNLLSQECELFQGVEDQVTELKRDLNLLSSFLKDADAKKHTSAVVKNCVEEIKEIIYDGEDTIETFVLEQNLGKTSGIKKSIRRLACIIPDRRRYALGIGGLSNRISKVIRDMQSFGVQQAIVDGGYKQPQGDKQREMRPRFSKDDDSDFVGLEANVKKLVGYLVDEANVQVVSITGMGGLGKTTLAKQVFNHEDVKHQFDGLSWVCVSQDFTRMNVWQKILRDLKPKEEEKKIMEMTQDTLQGELIRLLETSKSLIVLDDIWEKEDWELIKPIFPPTKGWKVLLTSRNESVAMRRNTSYINFKPECLTTEDSWTLFQRIALPMKDAAEFKIDEEKEELGKLMIKHCGGLPLAIRVLGGMLAEKYTSHDWRRLSENIGSHLVGGRTNFNDDNNNTCNYVLSLSFEELPSYLKHCFLYLAHFPDDYEINVKNLSYYWAAEGIFQPRHYDGEIIRDVGDVYIEELVRRNMVISERDVKTSRFETCHLHDMMREVCLLKAKEENFLQITSSRTSTGNSLSIVTSRRLVYQYPITLDVEKDINDPKLRSLVVVANTYMFWGGWSWMLLGSSFIRLELLRVLDIHRAKLKGGKLASSIGQLIHLRYLNLKHAEVTHIPYSLGNLKLLIYLNLVILVSGSTLVPNVLKEMQQLRYLALPKDMGRKTKLELSNLVKLETLKNFSTKNCSLEDLRGMVRLRTLTIELRKETSLETLAASIGGLKYLESLTITDLGSEMRTKEAGIVFDFVYLKTLTLKLYMPRLSKEQHFPSHLTTLYLQHCRLEEDPMPILEKLHQLKELELRRKSFSGKEMVCSSGGFPQLQKLSIKGLEEWEDWKVEESSMPVLHTLDIRDCRKLKQLPDEHLPSHLTSISLFFCCLEEDPMPTLERLVHLKELQLLFRSFSGRIMVCAGSGFPQLHKLKLSELDGLEEWIVEDGSMPQLHTLEIRRCPKLKKLPNGFPQLQNLELNELEEWEEWIVEDGSMPLLHTLRIWNCPKLKQLPDGLRFIYSLKNLTVPKRWKKRLSKGGEDYYKVQHIPSVEFY.

The stretch at 25–41 forms a coiled coil; that stretch reads QGVEDQVTELKRDLNLL. The interval 139–158 is disordered; the sequence is GYKQPQGDKQREMRPRFSKD. Over residues 144-158 the composition is skewed to basic and acidic residues; that stretch reads QGDKQREMRPRFSKD. One can recognise an NB-ARC domain in the interval 147–460; sequence KQREMRPRFS…AEGIFQPRHY (314 aa). An ATP-binding site is contributed by 190-197; the sequence is GMGGLGKT. LRR repeat units lie at residues 584-608, 609-634, 657-682, 683-707, 776-799, 800-827, 849-873, 896-923, 945-968, and 990-1015; these read LELLRVLDIHRAKLKGGKLASSIGQ, LIHLRYLNLKHAEVTHIPYSLGNLKL, MQQLRYLALPKDMGRKTKLELSNLVK, LETLKNFSTKNCSLEDLRGMVRLRT, PSHLTTLYLQHCRLEEDPMPILEK, LHQLKELELRRKSFSGKEMVCSSGGFPQ, MPVLHTLDIRDCRKLKQLPDEHLPS, LVHLKELQLLFRSFSGRIMVCAGSGFPQ, MPQLHTLEIRRCPKLKKLPNGFPQ, and MPLLHTLRIWNCPKLKQLPDGLRFIY.

This sequence belongs to the disease resistance NB-LRR family.

Its function is as follows. Potential disease resistance protein. This chain is Probable disease resistance protein RF9 (RF9), found in Arabidopsis thaliana (Mouse-ear cress).